Reading from the N-terminus, the 226-residue chain is DNA mismatch repair protein MutH (226 aa).

It belongs to the MutH family.

The protein resides in the cytoplasm. Sequence-specific endonuclease that cleaves unmethylated GATC sequences. It is involved in DNA mismatch repair. The protein is DNA mismatch repair protein MutH of Haemophilus ducreyi (strain 35000HP / ATCC 700724).